Reading from the N-terminus, the 428-residue chain is MYKEPFQPTYEYALECDKHDELKDFQTEFYKKEGTIYLDGNSLGLLSKRAEKSLLTLLDSWKEYGIDGWTEGEHPWFFLSEKLGELTAPLIGALPEETIVTGSTTTNIHQVIATFYEPKGIRTKILADELTFPSDIYALQSQIRLKGLDPDEHLVRVKSRDGRTLSEDDIIQAMTDDIALILLPSVLYRSGQILDMKRLTAEAHKRGIHIGFDLCHSIGSIPHHFKEWDVDFAIWCNYKYLNAGPGGVAGLYVNKKHFNRPPGLSGWFSSRKDKQFDMEHTLTAADHAGAYQIGTPHVLSTAPLIGSLEIFKDAGIERLREKSLHITRYMLNLIDHELKDFGFTIGNPFEDEKRGGHIYLEHAEAARICKALKANGVIPDFRAPNGVRLAPVALYNTYEEVWQSVMILKKIMKDEEYKQFENKREVVA.

Residues Thr104, Thr105, 132-135, Asp213, His216, and Tyr238 contribute to the pyridoxal 5'-phosphate site; that span reads FPSD. Lys239 is modified (N6-(pyridoxal phosphate)lysine). Pyridoxal 5'-phosphate contacts are provided by Trp267 and Thr295.

This sequence belongs to the kynureninase family. In terms of assembly, homodimer. The cofactor is pyridoxal 5'-phosphate.

It catalyses the reaction L-kynurenine + H2O = anthranilate + L-alanine + H(+). The catalysed reaction is 3-hydroxy-L-kynurenine + H2O = 3-hydroxyanthranilate + L-alanine + H(+). It participates in amino-acid degradation; L-kynurenine degradation; L-alanine and anthranilate from L-kynurenine: step 1/1. The protein operates within cofactor biosynthesis; NAD(+) biosynthesis; quinolinate from L-kynurenine: step 2/3. Functionally, catalyzes the cleavage of L-kynurenine (L-Kyn) and L-3-hydroxykynurenine (L-3OHKyn) into anthranilic acid (AA) and 3-hydroxyanthranilic acid (3-OHAA), respectively. The protein is Kynureninase of Bacillus cereus (strain ZK / E33L).